An 849-amino-acid chain; its full sequence is Probable receptor-like protein kinase At1g30570 (849 aa).

An N-terminal signal peptide occupies residues 1-28 (MSKLRKKYLEHLLCVLIFFTYVIGYGEA). Residues 29–429 (QSKSFLVDCG…GHSVSDSKMR (401 aa)) lie on the Extracellular side of the membrane. Asparagine 40, asparagine 57, asparagine 94, asparagine 122, asparagine 158, asparagine 268, asparagine 271, asparagine 305, and asparagine 343 each carry an N-linked (GlcNAc...) asparagine glycan. Residues 430–450 (IIWISVGAGIAIIIFFVFLGI) form a helical membrane-spanning segment. The Cytoplasmic segment spans residues 451-849 (LVVCLCKKRR…QTGSALHNSA (399 aa)). The Protein kinase domain maps to 520–793 (FDDGLAIGVG…GEVLWSLEYV (274 aa)). ATP is bound by residues 526-534 (IGVGGFGKV) and lysine 548. Catalysis depends on aspartate 644, which acts as the Proton acceptor. The segment at 810–849 (FSSSQAVEEAPESFTLPACSNQDSSETEQSQTGSALHNSA) is disordered. Residues 827–849 (ACSNQDSSETEQSQTGSALHNSA) show a composition bias toward polar residues.

This sequence belongs to the protein kinase superfamily. Ser/Thr protein kinase family.

The protein localises to the cell membrane. This chain is Probable receptor-like protein kinase At1g30570, found in Arabidopsis thaliana (Mouse-ear cress).